The sequence spans 723 residues: Catalase-peroxidase (723 aa).

Residues 89–212 (WHSAGTYRTG…LAAVQMGLIY (124 aa)) constitute a cross-link (tryptophyl-tyrosyl-methioninium (Trp-Tyr) (with M-238)). The Proton acceptor role is filled by histidine 90. A cross-link (tryptophyl-tyrosyl-methioninium (Tyr-Met) (with W-89)) is located at residues 212–238 (YVNPEGPNGDPDPFAAAVDIRETFARM). Histidine 253 lines the heme b pocket.

It belongs to the peroxidase family. Peroxidase/catalase subfamily. As to quaternary structure, homodimer or homotetramer. Heme b is required as a cofactor. Post-translationally, formation of the three residue Trp-Tyr-Met cross-link is important for the catalase, but not the peroxidase activity of the enzyme.

It carries out the reaction H2O2 + AH2 = A + 2 H2O. The catalysed reaction is 2 H2O2 = O2 + 2 H2O. Its function is as follows. Bifunctional enzyme with both catalase and broad-spectrum peroxidase activity. The chain is Catalase-peroxidase from Shewanella baltica (strain OS185).